A 466-amino-acid polypeptide reads, in one-letter code: Argininosuccinate lyase (466 aa).

It belongs to the lyase 1 family. Argininosuccinate lyase subfamily.

It is found in the cytoplasm. It carries out the reaction 2-(N(omega)-L-arginino)succinate = fumarate + L-arginine. It functions in the pathway amino-acid biosynthesis; L-arginine biosynthesis; L-arginine from L-ornithine and carbamoyl phosphate: step 3/3. This chain is Argininosuccinate lyase, found in Methylocella silvestris (strain DSM 15510 / CIP 108128 / LMG 27833 / NCIMB 13906 / BL2).